The following is a 200-amino-acid chain: MQKFIIHKGIACPLEYANIDTDQIIPKQFLLAVSKQGFGKHLFHDLRYLDDKESVLNMDFNLNKKEYQNSSILVSFENFGSGSSREHAPWALVDYGIRAIIAPSFADIFKNNALGNGLLTIELAKDEVLEIVDELKKSQDKNIEISLLEKRVFFKDKIFSFDLDDFHRICLLEGLDNIALTLKHEAQIKAYEKNSKSFLV.

The protein belongs to the LeuD family. LeuD type 1 subfamily. Heterodimer of LeuC and LeuD.

It catalyses the reaction (2R,3S)-3-isopropylmalate = (2S)-2-isopropylmalate. The protein operates within amino-acid biosynthesis; L-leucine biosynthesis; L-leucine from 3-methyl-2-oxobutanoate: step 2/4. Catalyzes the isomerization between 2-isopropylmalate and 3-isopropylmalate, via the formation of 2-isopropylmaleate. This is 3-isopropylmalate dehydratase small subunit from Campylobacter jejuni subsp. jejuni serotype O:6 (strain 81116 / NCTC 11828).